Reading from the N-terminus, the 305-residue chain is Mitochondrial distribution and morphology protein 12 (305 aa).

The region spanning M1–T236 is the SMP-LTD domain. The interval L233 to E305 is disordered. The segment covering F235–R248 has biased composition (acidic residues). Residues N258 to T269 are compositionally biased toward basic and acidic residues. The segment covering E279–E305 has biased composition (polar residues).

Belongs to the MDM12 family. As to quaternary structure, component of the ER-mitochondria encounter structure (ERMES) or MDM complex, composed of MMM1, MDM10, MDM12 and MDM34. An MMM1 homodimer associates with one molecule of MDM12 on each side in a pairwise head-to-tail manner, and the SMP-LTD domains of MMM1 and MDM12 generate a continuous hydrophobic tunnel for phospholipid trafficking.

It localises to the mitochondrion outer membrane. It is found in the endoplasmic reticulum membrane. Functionally, component of the ERMES/MDM complex, which serves as a molecular tether to connect the endoplasmic reticulum (ER) and mitochondria. Components of this complex are involved in the control of mitochondrial shape and protein biogenesis, and function in nonvesicular lipid trafficking between the ER and mitochondria. MDM12 is required for the interaction of the ER-resident membrane protein MMM1 and the outer mitochondrial membrane-resident beta-barrel protein MDM10. The MDM12-MMM1 subcomplex functions in the major beta-barrel assembly pathway that is responsible for biogenesis of all mitochondrial outer membrane beta-barrel proteins, and acts in a late step after the SAM complex. The MDM10-MDM12-MMM1 subcomplex further acts in the TOM40-specific pathway after the action of the MDM12-MMM1 complex. Essential for establishing and maintaining the structure of mitochondria and maintenance of mtDNA nucleoids. The polypeptide is Mitochondrial distribution and morphology protein 12 (Kluyveromyces lactis (strain ATCC 8585 / CBS 2359 / DSM 70799 / NBRC 1267 / NRRL Y-1140 / WM37) (Yeast)).